A 245-amino-acid polypeptide reads, in one-letter code: Probable phosphatase YcdX (245 aa).

The Zn(2+) site is built by H7, H9, H15, H40, E73, H101, H131, D192, and H194.

Belongs to the PHP family. Homotrimer. Zn(2+) serves as cofactor.

This is Probable phosphatase YcdX from Escherichia coli O81 (strain ED1a).